The primary structure comprises 319 residues: Olfactory receptor 8U3 (319 aa).

Topologically, residues 1 to 25 (MAEVNISYVSEFILKGITDRPELQA) are extracellular. Asn5 carries an N-linked (GlcNAc...) asparagine glycan. Residues 26–46 (PCFVMFLTIYLVTVLGNLGLI) form a helical membrane-spanning segment. The Cytoplasmic portion of the chain corresponds to 47–54 (VIIRVDSR). Residues 55-75 (LHTPMYFFLSHLAFVDLCYSS) form a helical membrane-spanning segment. The Extracellular portion of the chain corresponds to 76 to 99 (AITPKMMVNFVVERNTIPFHACAT). Cys97 and Cys189 are oxidised to a cystine. A helical membrane pass occupies residues 100-120 (QLGCFLTFMITECFLLASMAY). Residues 121–133 (DRYVAICSPLHYS) are Cytoplasmic-facing. The chain crosses the membrane as a helical span at residues 134-154 (TLMSKRVCIQLVAVPYVYSFL). Topologically, residues 155–196 (VALFHTIITFRLTYCGPNVINHFYCDDLPLLALSCSDTHMKE) are extracellular. The chain crosses the membrane as a helical span at residues 197–217 (ILIFAFAGFDMICSSSIVLTS). At 218 to 237 (YLFIIAAILRIRSTQGRRKA) the chain is on the cytoplasmic side. A helical membrane pass occupies residues 238-258 (ISTCGSHMVAVTIFYGTLIFM). The Extracellular portion of the chain corresponds to 259 to 271 (YLQPKSNHSLDTD). Asn265 carries N-linked (GlcNAc...) asparagine glycosylation. Residues 272–292 (KMASVFYTVVIPMLNPLIYSL) form a helical membrane-spanning segment. Residues 293–319 (RNKEVKDASKKALDKGYETLKILRLSK) lie on the Cytoplasmic side of the membrane.

This sequence belongs to the G-protein coupled receptor 1 family.

The protein localises to the cell membrane. Potential odorant receptor. The protein is Olfactory receptor 8U3 of Mus musculus (Mouse).